Consider the following 217-residue polypeptide: Octanoyltransferase (217 aa).

In terms of domain architecture, BPL/LPL catalytic spans 34–216 (SETRDELWLL…AASRASRHDR (183 aa)). Residues 73-80 (RGGQVTWH), 140-142 (ALG), and 153-155 (GLS) contribute to the substrate site. Cys-171 acts as the Acyl-thioester intermediate in catalysis.

The protein belongs to the LipB family.

It is found in the cytoplasm. The catalysed reaction is octanoyl-[ACP] + L-lysyl-[protein] = N(6)-octanoyl-L-lysyl-[protein] + holo-[ACP] + H(+). It functions in the pathway protein modification; protein lipoylation via endogenous pathway; protein N(6)-(lipoyl)lysine from octanoyl-[acyl-carrier-protein]: step 1/2. Functionally, catalyzes the transfer of endogenously produced octanoic acid from octanoyl-acyl-carrier-protein onto the lipoyl domains of lipoate-dependent enzymes. Lipoyl-ACP can also act as a substrate although octanoyl-ACP is likely to be the physiological substrate. The chain is Octanoyltransferase from Halorhodospira halophila (strain DSM 244 / SL1) (Ectothiorhodospira halophila (strain DSM 244 / SL1)).